Consider the following 335-residue polypeptide: MKSIFILVLGNTEVSLIPGISVAGATPELTKLTPPADAEYLFYEKPRIIDAIPVTPEGHPTPAIITKAARELANFPILVVRGGTYLAPLVPHVHISSAVGRDFRREPALPEFGEIVRMAKLLGEELNRTEIEELVIGESTPGGTTTAQAVLWAMGYDARTSSASPENPQSLKEQVIAEGFQRAGIERGQLKDNPLEALRQFGDPMMATVVGLALGFRKNVVLAGGTQMLAVSALLKALEEDMSRFMIATTKWVVRDKSATFIETAKEIGIITYAADLDFSKSEFKGLRDYENGYVKEGVGAGGATWLAIKAGFSPEEVSAKVEELYRRLMGMKSP.

It belongs to the UPF0284 family.

This is UPF0284 protein TK0853 from Thermococcus kodakarensis (strain ATCC BAA-918 / JCM 12380 / KOD1) (Pyrococcus kodakaraensis (strain KOD1)).